A 277-amino-acid chain; its full sequence is Putative hydro-lyase SCO1412 (277 aa).

This sequence belongs to the D-glutamate cyclase family.

The polypeptide is Putative hydro-lyase SCO1412 (Streptomyces coelicolor (strain ATCC BAA-471 / A3(2) / M145)).